The sequence spans 159 residues: Calcium-binding protein CML39 (159 aa).

EF-hand domains lie at 18–53 (EKNR…LGEQ), 54–89 (MSDE…NDEF), 93–128 (EKKR…LGES), and 129–159 (RTTD…LMMR). The Ca(2+) site is built by Asp-31, Asn-33, Asp-35, Arg-37, Glu-42, Asp-67, Asp-69, Asp-71, Met-73, and Glu-78. 4 residues coordinate Ca(2+): Asp-142, Asn-144, Asp-146, and Glu-153.

As to expression, expressed in the zones of elongation and differentiation in seedling roots and at the root-hypocotyl junction. Expressed from stage 12 of flower development in anthers, specifically in pollen.

Its function is as follows. Potential calcium sensor that binds calcium in vitro. The sequence is that of Calcium-binding protein CML39 (CML39) from Arabidopsis thaliana (Mouse-ear cress).